The following is a 66-amino-acid chain: Large ribosomal subunit protein bL31 (66 aa).

Positions 16, 18, 36, and 39 each coordinate Zn(2+).

This sequence belongs to the bacterial ribosomal protein bL31 family. Type A subfamily. Part of the 50S ribosomal subunit. Zn(2+) is required as a cofactor.

Functionally, binds the 23S rRNA. This Natranaerobius thermophilus (strain ATCC BAA-1301 / DSM 18059 / JW/NM-WN-LF) protein is Large ribosomal subunit protein bL31.